A 703-amino-acid chain; its full sequence is WPP domain-interacting tail-anchored protein 1 (703 aa).

The span at 1–12 (METETEHDRTVS) shows a compositional bias: basic and acidic residues. Disordered stretches follow at residues 1-27 (METE…SSTK) and 86-107 (FVSK…DDDS). Positions 92-107 (EDEEEPSSNVDDDDDS) are enriched in acidic residues. The stretch at 118 to 183 (SSILNSEVKE…MEQVVEMKKQ (66 aa)) forms a coiled coil. Residues 189–208 (RLSSGLDEQGSWSGGQTSVS) are disordered. Polar residues predominate over residues 198 to 208 (GSWSGGQTSVS). 3 coiled-coil regions span residues 236 to 265 (LEKS…MKLY), 318 to 461 (KRED…RDKG), and 500 to 604 (STVS…SREN). Residues 679-699 (FKHILVAILVILISSIAYVIS) form a helical membrane-spanning segment.

Homodimer. Component of Ran complexes at least composed of WIT1 or WIT2, RANGAP1 or RANGAP2, and WIP1 or WIP2 or WIP3. Interacts with WIP2, WPP1/MAF1, WPP2/MAF2, RANGAP1 and RANGAP2. Component of a ternary complex composed of WPP1, HSP70-1 and WIT1. Interacts with KAKU1. Interacts with WIP1. Ubiquitous.

Its subcellular location is the nucleus envelope. The protein localises to the nucleus membrane. Its function is as follows. Together with WIT2, required for the nuclear envelope docking of RANGAP proteins in root tips. In Arabidopsis thaliana (Mouse-ear cress), this protein is WPP domain-interacting tail-anchored protein 1 (WIT1).